We begin with the raw amino-acid sequence, 312 residues long: Phosphatidate cytidylyltransferase (312 aa).

A disordered region spans residues 1-31; the sequence is MASTDPGTGTPLDESVPGIKRAMRQSTKNTP. 8 helical membrane-spanning segments follow: residues 37–57, 58–78, 85–105, 110–130, 157–177, 186–206, 223–243, and 247–267; these read LPAAIAVGLSIGGVLVATLVF, APRIWVVLCAGAIFVASHEVV, GYVIPAIPLLIGGQFTVWLTW, VGALAGFGATVVVCMIWRLVM, ATVFLAAWVPLFASFAALLVY, FCLMIAVVASDVGGYTVGVLF, GFAGSLVCGTTATILTATFLA, and PWVGALLSFVLVLTCTLGDLV.

It belongs to the CDS family.

The protein localises to the cell membrane. It carries out the reaction a 1,2-diacyl-sn-glycero-3-phosphate + CTP + H(+) = a CDP-1,2-diacyl-sn-glycerol + diphosphate. Its pathway is phospholipid metabolism; CDP-diacylglycerol biosynthesis; CDP-diacylglycerol from sn-glycerol 3-phosphate: step 3/3. The polypeptide is Phosphatidate cytidylyltransferase (cdsA) (Mycobacterium leprae (strain TN)).